Consider the following 130-residue polypeptide: Protein NrdI (130 aa).

Belongs to the NrdI family.

Its function is as follows. Probably involved in ribonucleotide reductase function. The sequence is that of Protein NrdI from Bacillus velezensis (strain DSM 23117 / BGSC 10A6 / LMG 26770 / FZB42) (Bacillus amyloliquefaciens subsp. plantarum).